A 484-amino-acid chain; its full sequence is Glycogen synthase (484 aa).

Residue lysine 15 participates in ADP-alpha-D-glucose binding.

It belongs to the glycosyltransferase 1 family. Bacterial/plant glycogen synthase subfamily.

The enzyme catalyses [(1-&gt;4)-alpha-D-glucosyl](n) + ADP-alpha-D-glucose = [(1-&gt;4)-alpha-D-glucosyl](n+1) + ADP + H(+). The protein operates within glycan biosynthesis; glycogen biosynthesis. Its function is as follows. Synthesizes alpha-1,4-glucan chains using ADP-glucose. The protein is Glycogen synthase of Syntrophotalea carbinolica (strain DSM 2380 / NBRC 103641 / GraBd1) (Pelobacter carbinolicus).